The primary structure comprises 264 residues: Meiotically up-regulated gene 162 protein (264 aa).

The next 7 membrane-spanning stretches (helical) occupy residues 18–38, 54–74, 84–104, 140–160, 174–194, 199–219, and 223–243; these read IVIF…WNLK, LWIY…AGSA, VFQV…GYSF, IISI…LLFL, HLSY…IKLI, FVLG…SLIT, and LISY…IWIY.

It is found in the endoplasmic reticulum membrane. In terms of biological role, has a role in meiosis. The protein is Meiotically up-regulated gene 162 protein (mug162) of Schizosaccharomyces pombe (strain 972 / ATCC 24843) (Fission yeast).